A 313-amino-acid polypeptide reads, in one-letter code: Ribosomal RNA small subunit methyltransferase H (313 aa).

Residues 37–39, aspartate 57, phenylalanine 82, aspartate 104, and glutamine 111 contribute to the S-adenosyl-L-methionine site; that span reads GGH.

The protein belongs to the methyltransferase superfamily. RsmH family.

It is found in the cytoplasm. It carries out the reaction cytidine(1402) in 16S rRNA + S-adenosyl-L-methionine = N(4)-methylcytidine(1402) in 16S rRNA + S-adenosyl-L-homocysteine + H(+). In terms of biological role, specifically methylates the N4 position of cytidine in position 1402 (C1402) of 16S rRNA. This Alteromonas mediterranea (strain DSM 17117 / CIP 110805 / LMG 28347 / Deep ecotype) protein is Ribosomal RNA small subunit methyltransferase H.